We begin with the raw amino-acid sequence, 404 residues long: Formate-dependent phosphoribosylglycinamide formyltransferase (404 aa).

Residues 25–26 (EL) and Glu-85 contribute to the N(1)-(5-phospho-beta-D-ribosyl)glycinamide site. ATP contacts are provided by residues Arg-118, Lys-159, 164 to 169 (SSGKGQ), 199 to 202 (EGFI), and Glu-207. The ATP-grasp domain occupies 123 to 318 (RLAAEELGLP…EFELHARAIL (196 aa)). The Mg(2+) site is built by Glu-277 and Glu-289. N(1)-(5-phospho-beta-D-ribosyl)glycinamide-binding positions include Asp-296, Lys-365, and 372 to 373 (RR).

The protein belongs to the PurK/PurT family. As to quaternary structure, homodimer.

It catalyses the reaction N(1)-(5-phospho-beta-D-ribosyl)glycinamide + formate + ATP = N(2)-formyl-N(1)-(5-phospho-beta-D-ribosyl)glycinamide + ADP + phosphate + H(+). It participates in purine metabolism; IMP biosynthesis via de novo pathway; N(2)-formyl-N(1)-(5-phospho-D-ribosyl)glycinamide from N(1)-(5-phospho-D-ribosyl)glycinamide (formate route): step 1/1. Functionally, involved in the de novo purine biosynthesis. Catalyzes the transfer of formate to 5-phospho-ribosyl-glycinamide (GAR), producing 5-phospho-ribosyl-N-formylglycinamide (FGAR). Formate is provided by PurU via hydrolysis of 10-formyl-tetrahydrofolate. This is Formate-dependent phosphoribosylglycinamide formyltransferase from Burkholderia lata (strain ATCC 17760 / DSM 23089 / LMG 22485 / NCIMB 9086 / R18194 / 383).